The following is an 813-amino-acid chain: Protein translocase subunit SecA 2 (813 aa).

Residues Gln-105, Gly-123–Thr-127, and Asp-525 contribute to the ATP site.

The protein belongs to the SecA family. Monomer and homodimer. Part of the essential Sec protein translocation apparatus which comprises SecA, SecYEG and auxiliary proteins SecDF-YajC and YidC.

The protein localises to the cell inner membrane. It is found in the cytoplasm. The catalysed reaction is ATP + H2O + cellular proteinSide 1 = ADP + phosphate + cellular proteinSide 2.. Its function is as follows. Part of the Sec protein translocase complex. Interacts with the SecYEG preprotein conducting channel. Has a central role in coupling the hydrolysis of ATP to the transfer of proteins into and across the cell membrane, serving both as a receptor for the preprotein-SecB complex and as an ATP-driven molecular motor driving the stepwise translocation of polypeptide chains across the membrane. The chain is Protein translocase subunit SecA 2 from Rhodopseudomonas palustris (strain BisA53).